The primary structure comprises 522 residues: Sugar carrier protein A (522 aa).

The Cytoplasmic segment spans residues 1-22 (MAGGSLAPAGVAKERAEQYQGK). The next 12 helical transmembrane spans lie at 23 to 43 (VTFA…IFGY), 87 to 107 (AFTS…GPIT), 121 to 141 (ISFL…MLLL), 144 to 164 (IMLG…LSEM), 173 to 193 (LNIM…MVNY), 205 to 225 (LSLG…LLLP), 286 to 306 (LVMA…IILF), 322 to 342 (ALYS…ISIA), 351 to 371 (FLLI…AIIL), 384 to 404 (SFSV…GWSW), 430 to 450 (AVNL…LCAF), and 453 to 473 (GIFL…YIFL). Over 474 to 522 (PETKGVPIEEMIFLWRKHWFWKKIVPGQPEVDDSRESMEMGEAVASRIK) the chain is Cytoplasmic.

The protein belongs to the major facilitator superfamily. Sugar transporter (TC 2.A.1.1) family.

The protein localises to the membrane. The protein is Sugar carrier protein A (STA) of Ricinus communis (Castor bean).